The following is a 238-amino-acid chain: Probable transcriptional regulatory protein SpyM51586 (238 aa).

This sequence belongs to the TACO1 family. YeeN subfamily.

It is found in the cytoplasm. The sequence is that of Probable transcriptional regulatory protein SpyM51586 from Streptococcus pyogenes serotype M5 (strain Manfredo).